A 254-amino-acid polypeptide reads, in one-letter code: Protein odd-skipped-related 2 (254 aa).

3 C2H2-type zinc fingers span residues 124-146, 152-174, and 180-202; these read FICKYCDRHFTKSYNLLIHERTH, YSCDVCGKAFRRQDHLRDHKYIH, and FKCEICGKGFCQSRTLLVHRATH.

The protein belongs to the Odd C2H2-type zinc-finger protein family.

It localises to the nucleus. Its function is as follows. May function as transcription regulator. Required for morphogenesis and function of the digestive tract. This Caenorhabditis elegans protein is Protein odd-skipped-related 2.